The sequence spans 185 residues: MKLITGLGNPGRKYDQTKHNTGFMALDHYLEKNGLTLDKNKFEGLWTKQKINGEDVIFLEPQTFMNDSGKSIAQVANFFKIKPEDILVIHDDMDMPIGKIRIRANGKSGGHNGIKSIMACLGTNNFNRLKIGIRHPENESVVSWVLSPFNNDQQKLMDAAFETSENVINDFIKGKNAQYLMNQYN.

Tyr-14 is a binding site for tRNA. The active-site Proton acceptor is the His-19. Residues Phe-64, Asn-66, and Asn-112 each contribute to the tRNA site.

This sequence belongs to the PTH family. Monomer.

Its subcellular location is the cytoplasm. The catalysed reaction is an N-acyl-L-alpha-aminoacyl-tRNA + H2O = an N-acyl-L-amino acid + a tRNA + H(+). Hydrolyzes ribosome-free peptidyl-tRNAs (with 1 or more amino acids incorporated), which drop off the ribosome during protein synthesis, or as a result of ribosome stalling. In terms of biological role, catalyzes the release of premature peptidyl moieties from peptidyl-tRNA molecules trapped in stalled 50S ribosomal subunits, and thus maintains levels of free tRNAs and 50S ribosomes. This Lactobacillus johnsonii (strain CNCM I-12250 / La1 / NCC 533) protein is Peptidyl-tRNA hydrolase.